The sequence spans 217 residues: Carboxylesterase Culp1 (217 aa).

The first 32 residues, 1–32 (MTPRSLVRIVGVVVATTLALVSAPAGGRAAHA), serve as a signal peptide directing secretion. Cys35 and Cys107 are disulfide-bonded. Ser118 functions as the Nucleophile in the catalytic mechanism. A disulfide bond links Cys177 and Cys184. Residue Asp181 is part of the active site. His193 serves as the catalytic Proton donor/acceptor.

The protein belongs to the cutinase family.

It is found in the secreted. It carries out the reaction a fatty acid ester + H2O = an aliphatic alcohol + a fatty acid + H(+). Functionally, shows esterase activity, with a preference for short- and medium-chain fatty acids. This is Carboxylesterase Culp1 from Mycobacterium bovis (strain ATCC BAA-935 / AF2122/97).